Here is a 312-residue protein sequence, read N- to C-terminus: Putative electron transfer flavoprotein subunit YdiR (312 aa).

Residue 254-282 (LYLTLGISGQIQHMVGGNGAKVIVAINKD) coordinates FAD.

The protein belongs to the ETF alpha-subunit/FixB family. As to quaternary structure, ydiR and YdiQ form a heterodimer.

Functionally, may play a role in a redox process. This chain is Putative electron transfer flavoprotein subunit YdiR (ydiR), found in Escherichia coli (strain K12).